The primary structure comprises 441 residues: Actin-related protein 4 (441 aa).

A disordered region spans residues Val-48–Arg-73. Residues Glu-60–Lys-70 show a composition bias toward basic and acidic residues.

Belongs to the actin family. ARP4 subfamily. As to quaternary structure, component of the SWR1 chromatin-remodeling complex and of the NuA4 histone acetyltransferase complex. Interacts with the SWI/SNF complex. Interacts with EAF1A and EAF1B. Mostly expressed in flowers, and, to a lower extent, in roots, seedlings, leaves and siliques (at protein level).

It is found in the nucleus. Its subcellular location is the cytoplasm. Its function is as follows. Involved in several developmental processes including organization of plant organs, flowering time, anther development, flower senescence and fertility, probably by regulating the chromatin structure. The chain is Actin-related protein 4 from Arabidopsis thaliana (Mouse-ear cress).